The primary structure comprises 448 residues: MSQSTATYINVIGAGLAGSEAAYQIAKRGIPVKLYEMRGVKATPQHKTTNFAELVCSNSFRGDSLTNAVGLLKEEMRRLDSIIMRNGEANRVPAGGAMAVDREGYAESVTAELENHPLIDVIRDEITEIPDDAITVIATGPLTSDALAEKIHAVNGGDGFYFYDAAAPIIDKSTIDMSKVYLKSRYDKGEAAYLNCPMTKEEFMAFHEALTTAEEAPLNSFEKEKYFEGCMPIEVMAKRGIKTMLYGPMKPVGLEYPDDYTGPRDGEFKTPYAVVQLRQDNAAGSLYNIVGFQTHLKWGEQKRVFQMIPGLENAEFVRYGVMHRNSYMDSPNLLTETFQSRNNPNLFFAGQMTGVEGYVESAASGLVAGINAARLFKREEALVFPQTTAIGSLPHYVTHADSKHFQPMNVNFGIIKELEGPRIRDKKERYEAIASRALADLDTCLASL.

13–18 provides a ligand contact to FAD; it reads GAGLAG.

Belongs to the MnmG family. TrmFO subfamily. FAD is required as a cofactor.

It is found in the cytoplasm. The catalysed reaction is uridine(54) in tRNA + (6R)-5,10-methylene-5,6,7,8-tetrahydrofolate + NADH + H(+) = 5-methyluridine(54) in tRNA + (6S)-5,6,7,8-tetrahydrofolate + NAD(+). It carries out the reaction uridine(54) in tRNA + (6R)-5,10-methylene-5,6,7,8-tetrahydrofolate + NADPH + H(+) = 5-methyluridine(54) in tRNA + (6S)-5,6,7,8-tetrahydrofolate + NADP(+). In terms of biological role, catalyzes the folate-dependent formation of 5-methyl-uridine at position 54 (M-5-U54) in all tRNAs. This is Methylenetetrahydrofolate--tRNA-(uracil-5-)-methyltransferase TrmFO from Streptococcus pyogenes serotype M12 (strain MGAS2096).